A 556-amino-acid chain; its full sequence is Chaperone protein HscC (556 aa).

The protein belongs to the heat shock protein 70 family.

Its function is as follows. Probable chaperone. Has ATPase activity. Not stimulated by DnaJ. This chain is Chaperone protein HscC (hscC), found in Escherichia coli (strain K12).